The sequence spans 100 residues: MLKNRYLKYLFILILLSILSIMPIFAIIYRIFSRNYLYAFIIVCLFFQILAHIKFFLNLDFSLEQRWKLISVIFSLVVGLIILLGSIWVIKNLNNNLCIM.

The Cytoplasmic portion of the chain corresponds to 1-9 (MLKNRYLKY). Residues 10 to 32 (LFILILLSILSIMPIFAIIYRIF) traverse the membrane as a helical segment. Residues 33–36 (SRNY) are Extracellular-facing. The chain crosses the membrane as a helical span at residues 37–59 (LYAFIIVCLFFQILAHIKFFLNL). Topologically, residues 60–68 (DFSLEQRWK) are cytoplasmic. A helical membrane pass occupies residues 69–90 (LISVIFSLVVGLIILLGSIWVI). Topologically, residues 91–100 (KNLNNNLCIM) are extracellular.

The protein belongs to the cytochrome c oxidase bacterial subunit 4 family. In terms of assembly, heterooctamer of two A chains, two B chains, two C chains and two D chains.

The protein resides in the cell membrane. Its function is as follows. Cytochrome bo(3) ubiquinol terminal oxidase is the component of the aerobic respiratory chain of E.coli that predominates when cells are grown at high aeration. Has proton pump activity across the membrane in addition to electron transfer, pumping 2 protons/electron. The protein is Cytochrome bo(3) ubiquinol oxidase subunit 4 (cyoD) of Buchnera aphidicola subsp. Baizongia pistaciae (strain Bp).